We begin with the raw amino-acid sequence, 247 residues long: UPF0612 protein P20C8.01c (247 aa).

Coiled coils occupy residues 27-63 (IKRYERSVDSTLLEIDENKREALEKYIEERDRKMKYE) and 138-225 (DTVQ…DARS).

Belongs to the UPF0612 family.

It localises to the cytoplasm. In Schizosaccharomyces pombe (strain 972 / ATCC 24843) (Fission yeast), this protein is UPF0612 protein P20C8.01c.